The following is a 407-amino-acid chain: Carbamoyl phosphate synthase small chain (407 aa).

The segment at M1 to A205 is CPSase. L-glutamine-binding residues include S60, G257, and G259. Residues H209 to Q397 form the Glutamine amidotransferase type-1 domain. C286 acts as the Nucleophile in catalysis. Residues L287, Q290, N328, G330, and F331 each coordinate L-glutamine. Catalysis depends on residues H370 and E372.

The protein belongs to the CarA family. As to quaternary structure, composed of two chains; the small (or glutamine) chain promotes the hydrolysis of glutamine to ammonia, which is used by the large (or ammonia) chain to synthesize carbamoyl phosphate. Tetramer of heterodimers (alpha,beta)4.

The enzyme catalyses hydrogencarbonate + L-glutamine + 2 ATP + H2O = carbamoyl phosphate + L-glutamate + 2 ADP + phosphate + 2 H(+). It catalyses the reaction L-glutamine + H2O = L-glutamate + NH4(+). The protein operates within amino-acid biosynthesis; L-arginine biosynthesis; carbamoyl phosphate from bicarbonate: step 1/1. It functions in the pathway pyrimidine metabolism; UMP biosynthesis via de novo pathway; (S)-dihydroorotate from bicarbonate: step 1/3. In terms of biological role, small subunit of the glutamine-dependent carbamoyl phosphate synthetase (CPSase). CPSase catalyzes the formation of carbamoyl phosphate from the ammonia moiety of glutamine, carbonate, and phosphate donated by ATP, constituting the first step of 2 biosynthetic pathways, one leading to arginine and/or urea and the other to pyrimidine nucleotides. The small subunit (glutamine amidotransferase) binds and cleaves glutamine to supply the large subunit with the substrate ammonia. The polypeptide is Carbamoyl phosphate synthase small chain (Brucella canis (strain ATCC 23365 / NCTC 10854 / RM-666)).